The sequence spans 363 residues: Probable protein phosphatase 2C member 13, mitochondrial (363 aa).

The N-terminal 59 residues, 1-59 (MVCFASLRRALPLLLRATTTTTPRFLLPRALSGGVGGGAAVDARALLRGHSGWRGLRVA), are a transit peptide targeting the mitochondrion. The PPM-type phosphatase domain maps to 111 to 357 (KCGYSSFRGK…DNITCIVVQF (247 aa)). Residues Asp147, Gly148, Asp309, and Asp348 each coordinate Mn(2+).

Belongs to the PP2C family. Mg(2+) is required as a cofactor. It depends on Mn(2+) as a cofactor. In terms of tissue distribution, highly expressed in mature pollen grains.

It is found in the mitochondrion. The enzyme catalyses O-phospho-L-seryl-[protein] + H2O = L-seryl-[protein] + phosphate. The catalysed reaction is O-phospho-L-threonyl-[protein] + H2O = L-threonyl-[protein] + phosphate. Its function is as follows. Probable protein phosphatase that may play a role as a mitochondrial signal transduction mediator in pollen germination. May function in retrograde signaling from the mitochondria to the nucleus. May be a downstream factor of cytoplasmic male sterility (CMS). CMS is caused by genetic incompatibility between nuclei and mitochondria within male reproductive organs. This chain is Probable protein phosphatase 2C member 13, mitochondrial, found in Oryza sativa subsp. japonica (Rice).